A 116-amino-acid polypeptide reads, in one-letter code: Flagellar transcriptional regulator FlhD (116 aa).

This sequence belongs to the FlhD family. In terms of assembly, homodimer; disulfide-linked. Forms a heterohexamer composed of two FlhC and four FlhD subunits. Each FlhC binds a FlhD dimer, forming a heterotrimer, and a hexamer assembles by dimerization of two heterotrimers.

It localises to the cytoplasm. Its function is as follows. Functions in complex with FlhC as a master transcriptional regulator that regulates transcription of several flagellar and non-flagellar operons by binding to their promoter region. Activates expression of class 2 flagellar genes, including fliA, which is a flagellum-specific sigma factor that turns on the class 3 genes. Also regulates genes whose products function in a variety of physiological pathways. In Proteus mirabilis (strain HI4320), this protein is Flagellar transcriptional regulator FlhD.